The chain runs to 760 residues: DEAD-box ATP-dependent RNA helicase 24 (760 aa).

Disordered stretches follow at residues 1 to 76 (MSNR…GEVD) and 90 to 113 (QEMKSAPPPKPKEKLERYKDDDDD). Residues 14–27 (NRQTSYSFERSQAP) are compositionally biased toward polar residues. Residues 41 to 64 (NSEDADLDNIDYMENEEAEEDIEE) are compositionally biased toward acidic residues. The span at 99-109 (KPKEKLERYKD) shows a compositional bias: basic and acidic residues. Phosphoserine is present on Ser160. The short motif at 228 to 256 (KTFEDCGFSSQIMSAIKKQAYEKPTAIQC) is the Q motif element. Residues 259-434 (LPIVLSGRDV…REILSDPIRV (176 aa)) enclose the Helicase ATP-binding domain. 272-279 (AKTGSGKT) lines the ATP pocket. The DEAD box signature appears at 382–385 (DEAD). Residues 459-608 (KLPWLLEKLP…NVPPELTDLA (150 aa)) enclose the Helicase C-terminal domain. Disordered regions lie at residues 604–638 (LTDLAMKDGRFKSKRDGRKGGKKGRGGGGGNKGVR), 647–666 (GFSSESSRTPSSKAAPSRSG), and 706–760 (FVSG…GWDN). Basic residues predominate over residues 615-628 (KSKRDGRKGGKKGR). Gly residues predominate over residues 629-638 (GGGGGNKGVR). A compositionally biased stretch (polar residues) spans 649–666 (SSESSRTPSSKAAPSRSG). The span at 707 to 716 (VSGGTIGGDM) shows a compositional bias: gly residues. Positions 718–732 (RTQSQAPPVAPTQNA) are enriched in polar residues. The span at 733–745 (SSHNSSQNHSQSS) shows a compositional bias: low complexity. Residues 750–760 (RERKRRSGWDN) show a composition bias toward basic residues.

It belongs to the DEAD box helicase family.

It carries out the reaction ATP + H2O = ADP + phosphate + H(+). The sequence is that of DEAD-box ATP-dependent RNA helicase 24 (RH24) from Arabidopsis thaliana (Mouse-ear cress).